A 415-amino-acid polypeptide reads, in one-letter code: Methylthioribose-1-phosphate isomerase (415 aa).

Asp-284 (proton donor) is an active-site residue.

This sequence belongs to the eIF-2B alpha/beta/delta subunits family. MtnA subfamily.

Its subcellular location is the cytoplasm. It localises to the nucleus. The enzyme catalyses 5-(methylsulfanyl)-alpha-D-ribose 1-phosphate = 5-(methylsulfanyl)-D-ribulose 1-phosphate. It functions in the pathway amino-acid biosynthesis; L-methionine biosynthesis via salvage pathway; L-methionine from S-methyl-5-thio-alpha-D-ribose 1-phosphate: step 1/6. Functionally, catalyzes the interconversion of methylthioribose-1-phosphate (MTR-1-P) into methylthioribulose-1-phosphate (MTRu-1-P). This is Methylthioribose-1-phosphate isomerase from Candida glabrata (strain ATCC 2001 / BCRC 20586 / JCM 3761 / NBRC 0622 / NRRL Y-65 / CBS 138) (Yeast).